Consider the following 147-residue polypeptide: Large ribosomal subunit protein bL9 (147 aa).

The protein belongs to the bacterial ribosomal protein bL9 family.

In terms of biological role, binds to the 23S rRNA. The sequence is that of Large ribosomal subunit protein bL9 from Clostridium botulinum (strain Alaska E43 / Type E3).